The chain runs to 346 residues: Phenylalanine--tRNA ligase alpha subunit (346 aa).

A Mg(2+)-binding site is contributed by Glu-264.

This sequence belongs to the class-II aminoacyl-tRNA synthetase family. Phe-tRNA synthetase alpha subunit type 1 subfamily. As to quaternary structure, tetramer of two alpha and two beta subunits. Mg(2+) is required as a cofactor.

It is found in the cytoplasm. The catalysed reaction is tRNA(Phe) + L-phenylalanine + ATP = L-phenylalanyl-tRNA(Phe) + AMP + diphosphate + H(+). This Leifsonia xyli subsp. xyli (strain CTCB07) protein is Phenylalanine--tRNA ligase alpha subunit.